A 105-amino-acid chain; its full sequence is Heat shock protein HspQ (105 aa).

Residues 84 to 105 are disordered; it reads QPKLDELSASIKKQLKTPRLRN. Residues 96–105 are compositionally biased toward basic residues; it reads KQLKTPRLRN.

The protein belongs to the HspQ family.

It localises to the cytoplasm. Its function is as follows. Involved in the degradation of certain denaturated proteins, including DnaA, during heat shock stress. This is Heat shock protein HspQ from Wigglesworthia glossinidia brevipalpis.